Consider the following 531-residue polypeptide: MSDILSQDWRDRRTFAIISHPDAGKTTLTEKLLLFGGAIALAGAVKGRKAAHHATSDWMKMEQERGISVTSSVMQFPYHGKVINLLDTPGHEDFSEDTYRTLTAVDSALMVIDCAKGVEERTIKLMEVCRLRTTPIFTFVNKLDRDGREPMEILDEIERVLHIQCAPVTWPIGMGRSLKGIYHLARDTVYFYTTGKGGASINHGETVVGLDNPRLDTLLPDIIDDFREEIHFLREVGNPFDHEAYLRGELTPVYFGSAISNFGVEEMLTDFAQLAPPPRPHRTTEREVAPQEEKLTGFVFKIQANMDLKHRDRIAFMRVNSGTFRAGMKLWQVRLGREVKIPDALTFLAAEREHAQEAFAGDIIGIHNHGTIRIGDTFTEGESLQFTGIPDFAPELFRRVQLKDPLKMKALLKGLAQLCEEGATQFFKPLIGSDLILGAIGVLQFEVVQQRLETEYNVKCQFESVAVATARWIEAPNDKALKQFIDKNQANLAHDHYEQLVYIAPSRVNLQLTQERFPDIVFSQTRDHLAQ.

The 270-residue stretch at arginine 10–arginine 279 folds into the tr-type G domain. Residues serine 19–threonine 26, aspartate 87–histidine 91, and asparagine 141–aspartate 144 each bind GTP.

This sequence belongs to the TRAFAC class translation factor GTPase superfamily. Classic translation factor GTPase family. PrfC subfamily.

The protein resides in the cytoplasm. In terms of biological role, increases the formation of ribosomal termination complexes and stimulates activities of RF-1 and RF-2. It binds guanine nucleotides but is not codon-specific. It may interact directly with the ribosome. The stimulation of RF-1 and RF-2 is significantly reduced by GTP and GDP, but not by GMP. The polypeptide is Peptide chain release factor 3 (prfC) (Dichelobacter nodosus (Bacteroides nodosus)).